Here is a 126-residue protein sequence, read N- to C-terminus: Aspartate 1-decarboxylase (126 aa).

Ser25 functions as the Schiff-base intermediate with substrate; via pyruvic acid in the catalytic mechanism. Ser25 carries the post-translational modification Pyruvic acid (Ser). Thr57 provides a ligand contact to substrate. The Proton donor role is filled by Tyr58. 73–75 (GGA) provides a ligand contact to substrate.

Belongs to the PanD family. As to quaternary structure, heterooctamer of four alpha and four beta subunits. It depends on pyruvate as a cofactor. Post-translationally, is synthesized initially as an inactive proenzyme, which is activated by self-cleavage at a specific serine bond to produce a beta-subunit with a hydroxyl group at its C-terminus and an alpha-subunit with a pyruvoyl group at its N-terminus.

Its subcellular location is the cytoplasm. The catalysed reaction is L-aspartate + H(+) = beta-alanine + CO2. It functions in the pathway cofactor biosynthesis; (R)-pantothenate biosynthesis; beta-alanine from L-aspartate: step 1/1. Its function is as follows. Catalyzes the pyruvoyl-dependent decarboxylation of aspartate to produce beta-alanine. The chain is Aspartate 1-decarboxylase from Xanthomonas axonopodis pv. citri (strain 306).